Consider the following 219-residue polypeptide: Small ribosomal subunit protein uS3c (219 aa).

In terms of domain architecture, KH type-2 spans 39–118; the sequence is IRSFIRKYIQ…RLNIVITKVE (80 aa).

This sequence belongs to the universal ribosomal protein uS3 family. In terms of assembly, part of the 30S ribosomal subunit.

Its subcellular location is the plastid. The chain is Small ribosomal subunit protein uS3c (rps3) from Cuscuta obtusiflora (Peruvian dodder).